We begin with the raw amino-acid sequence, 64 residues long: Large ribosomal subunit protein bL35 (64 aa).

Polar residues predominate over residues 1-10 (MPKMKTNSAA). Residues 1–64 (MPKMKTNSAA…SKNMKKLLGR (64 aa)) form a disordered region.

The protein belongs to the bacterial ribosomal protein bL35 family.

This Bifidobacterium adolescentis (strain ATCC 15703 / DSM 20083 / NCTC 11814 / E194a) protein is Large ribosomal subunit protein bL35.